Consider the following 356-residue polypeptide: Torsin-like protein (356 aa).

The first 18 residues, 1-18, serve as a signal peptide directing secretion; it reads MKLDYVLLLLFHLCFVNT. 110 to 117 lines the ATP pocket; it reads GYTGSGKN. 2 N-linked (GlcNAc...) asparagine glycosylation sites follow: asparagine 125 and asparagine 250.

Belongs to the ClpA/ClpB family. Torsin subfamily.

It localises to the endoplasmic reticulum lumen. Its function is as follows. May serve as a molecular chaperone assisting in the proper folding of secreted and/or membrane proteins. This chain is Torsin-like protein (ooc-5), found in Caenorhabditis elegans.